Reading from the N-terminus, the 356-residue chain is Inactive ubiquitin thioesterase OTULINL (356 aa).

The tract at residues 1–22 (MAATRSPTRARERERSGAPAAG) is disordered. The interval 1-83 (MAATRSPTRA…KWWIGYLQRK (83 aa)) is required for membrane binding. Positions 128–356 (KCVRQVRRDN…NDRHYHIPVF (229 aa)) constitute an OTU domain.

This sequence belongs to the peptidase C65 family. Otulin subfamily. As to quaternary structure, does not bind ubiquitin or ubiquitin-like proteins.

The protein localises to the cytoplasm. It is found in the endoplasmic reticulum membrane. The protein resides in the nucleus envelope. Its function is as follows. Lacks deubiquitinase activity. This Homo sapiens (Human) protein is Inactive ubiquitin thioesterase OTULINL.